Here is a 124-residue protein sequence, read N- to C-terminus: Small ribosomal subunit protein bS6 (124 aa).

Residues 96-124 (ETGPSPMMKEVQREEAKKAAAAQPAEAQA) are disordered. The segment covering 114–124 (AAAAQPAEAQA) has biased composition (low complexity).

This sequence belongs to the bacterial ribosomal protein bS6 family.

Its function is as follows. Binds together with bS18 to 16S ribosomal RNA. This Burkholderia orbicola (strain MC0-3) protein is Small ribosomal subunit protein bS6.